We begin with the raw amino-acid sequence, 387 residues long: Sorting nexin-7 (387 aa).

A PX domain is found at 30-151 (KDLFITVDEP…IFLTAQAWEL (122 aa)). The a 1,2-diacyl-sn-glycero-3-phospho-(1D-myo-inositol-3-phosphate) site is built by Arg-73, Gln-75, Lys-103, and Arg-117. One can recognise a BAR domain in the interval 178–387 (GVKNRPEEFM…HLEETSEDKP (210 aa)).

This sequence belongs to the sorting nexin family. Heterodimer; heterodimerizes with SNX4.

It localises to the early endosome membrane. In terms of biological role, involved in the regulation of endocytosis and in several stages of intracellular trafficking. Together with SNX4, involved in autophagosome assembly by regulating trafficking and recycling of phospholipid scramblase ATG9A. This is Sorting nexin-7 (SNX7) from Macaca fascicularis (Crab-eating macaque).